The following is a 71-amino-acid chain: General transcription factor IIH subunit 5 (71 aa).

A Phosphothreonine modification is found at Thr69.

This sequence belongs to the TFB5 family. As to quaternary structure, component of the 7-subunit TFIIH core complex composed of XPB/ERCC3, XPD/ERCC2, GTF2H1, GTF2H2, GTF2H3, GTF2H4 and GTF2H5, which is active in NER. The core complex associates with the 3-subunit CDK-activating kinase (CAK) module composed of CCNH/cyclin H, CDK7 and MNAT1 to form the 10-subunit holoenzyme (holo-TFIIH) active in transcription. Part of TBP-based Pol II pre-initiation complex (PIC), in which Pol II core assembles with general transcription factors and other specific initiation factors including GTF2E1, GTF2E2, GTF2F1, GTF2F2, TCEA1, ERCC2, ERCC3, GTF2H2, GTF2H3, GTF2H4, GTF2H5, GTF2A1, GTF2A2, GTF2B and TBP; this large multi-subunit PIC complex mediates DNA unwinding and targets Pol II core to the transcription start site where the first phosphodiester bond forms.

It is found in the nucleus. Its subcellular location is the cytoplasm. Component of the general transcription and DNA repair factor IIH (TFIIH) core complex, which is involved in general and transcription-coupled nucleotide excision repair (NER) of damaged DNA and, when complexed to CAK, in RNA transcription by RNA polymerase II. In NER, TFIIH acts by opening DNA around the lesion to allow the excision of the damaged oligonucleotide and its replacement by a new DNA fragment. In transcription, TFIIH has an essential role in transcription initiation. When the pre-initiation complex (PIC) has been established, TFIIH is required for promoter opening and promoter escape. Phosphorylation of the C-terminal tail (CTD) of the largest subunit of RNA polymerase II by the kinase module CAK controls the initiation of transcription. Necessary for the stability of the TFIIH complex and for the presence of normal levels of TFIIH in the cell. This Mus musculus (Mouse) protein is General transcription factor IIH subunit 5.